The sequence spans 311 residues: Porphobilinogen deaminase (311 aa).

Residue Cys-243 is modified to S-(dipyrrolylmethanemethyl)cysteine.

The protein belongs to the HMBS family. As to quaternary structure, monomer. Dipyrromethane serves as cofactor.

The catalysed reaction is 4 porphobilinogen + H2O = hydroxymethylbilane + 4 NH4(+). It participates in porphyrin-containing compound metabolism; protoporphyrin-IX biosynthesis; coproporphyrinogen-III from 5-aminolevulinate: step 2/4. In terms of biological role, tetrapolymerization of the monopyrrole PBG into the hydroxymethylbilane pre-uroporphyrinogen in several discrete steps. This is Porphobilinogen deaminase from Aliivibrio salmonicida (strain LFI1238) (Vibrio salmonicida (strain LFI1238)).